A 171-amino-acid chain; its full sequence is ATP synthase subunit b (171 aa).

Residues Lys-3 to Thr-23 traverse the membrane as a helical segment.

Belongs to the ATPase B chain family. F-type ATPases have 2 components, F(1) - the catalytic core - and F(0) - the membrane proton channel. F(1) has five subunits: alpha(3), beta(3), gamma(1), delta(1), epsilon(1). F(0) has three main subunits: a(1), b(2) and c(10-14). The alpha and beta chains form an alternating ring which encloses part of the gamma chain. F(1) is attached to F(0) by a central stalk formed by the gamma and epsilon chains, while a peripheral stalk is formed by the delta and b chains.

It localises to the cell inner membrane. Its function is as follows. F(1)F(0) ATP synthase produces ATP from ADP in the presence of a proton or sodium gradient. F-type ATPases consist of two structural domains, F(1) containing the extramembraneous catalytic core and F(0) containing the membrane proton channel, linked together by a central stalk and a peripheral stalk. During catalysis, ATP synthesis in the catalytic domain of F(1) is coupled via a rotary mechanism of the central stalk subunits to proton translocation. Functionally, component of the F(0) channel, it forms part of the peripheral stalk, linking F(1) to F(0). The protein is ATP synthase subunit b of Campylobacter hominis (strain ATCC BAA-381 / DSM 21671 / CCUG 45161 / LMG 19568 / NCTC 13146 / CH001A).